Here is a 453-residue protein sequence, read N- to C-terminus: Trigger factor (453 aa).

Residues 171-256 (GDRVTVSFKG…ATKVEAPQDV (86 aa)) form the PPIase FKBP-type domain.

The protein belongs to the FKBP-type PPIase family. Tig subfamily.

It localises to the cytoplasm. It catalyses the reaction [protein]-peptidylproline (omega=180) = [protein]-peptidylproline (omega=0). Functionally, involved in protein export. Acts as a chaperone by maintaining the newly synthesized protein in an open conformation. Functions as a peptidyl-prolyl cis-trans isomerase. This Rhodopseudomonas palustris (strain BisB5) protein is Trigger factor.